Consider the following 252-residue polypeptide: 3-dehydroquinate dehydratase (252 aa).

Residues Ser-21, 46 to 48 (EWR), and Arg-82 each bind 3-dehydroquinate. The active-site Proton donor/acceptor is His-143. Catalysis depends on Lys-170, which acts as the Schiff-base intermediate with substrate. Arg-213, Ser-232, and Gln-236 together coordinate 3-dehydroquinate.

Belongs to the type-I 3-dehydroquinase family. In terms of assembly, homodimer.

It carries out the reaction 3-dehydroquinate = 3-dehydroshikimate + H2O. Its pathway is metabolic intermediate biosynthesis; chorismate biosynthesis; chorismate from D-erythrose 4-phosphate and phosphoenolpyruvate: step 3/7. In terms of biological role, involved in the third step of the chorismate pathway, which leads to the biosynthesis of aromatic amino acids. Catalyzes the cis-dehydration of 3-dehydroquinate (DHQ) and introduces the first double bond of the aromatic ring to yield 3-dehydroshikimate. The chain is 3-dehydroquinate dehydratase from Escherichia coli (strain 55989 / EAEC).